A 164-amino-acid polypeptide reads, in one-letter code: ATP synthase subunit b (164 aa).

The helical transmembrane segment at G6–I26 threads the bilayer.

Belongs to the ATPase B chain family. As to quaternary structure, F-type ATPases have 2 components, F(1) - the catalytic core - and F(0) - the membrane proton channel. F(1) has five subunits: alpha(3), beta(3), gamma(1), delta(1), epsilon(1). F(0) has three main subunits: a(1), b(2) and c(10-14). The alpha and beta chains form an alternating ring which encloses part of the gamma chain. F(1) is attached to F(0) by a central stalk formed by the gamma and epsilon chains, while a peripheral stalk is formed by the delta and b chains.

It is found in the cell membrane. Functionally, f(1)F(0) ATP synthase produces ATP from ADP in the presence of a proton or sodium gradient. F-type ATPases consist of two structural domains, F(1) containing the extramembraneous catalytic core and F(0) containing the membrane proton channel, linked together by a central stalk and a peripheral stalk. During catalysis, ATP synthesis in the catalytic domain of F(1) is coupled via a rotary mechanism of the central stalk subunits to proton translocation. Component of the F(0) channel, it forms part of the peripheral stalk, linking F(1) to F(0). The sequence is that of ATP synthase subunit b from Streptococcus pyogenes serotype M12 (strain MGAS2096).